The primary structure comprises 1405 residues: Protein crumbs homolog 1 (1405 aa).

The N-terminal stretch at 1–27 (MKLKRTAYLLFLYLSSSLLICIKNSFC) is a signal peptide. The Extracellular portion of the chain corresponds to 28 to 1339 (NKNNTRCLSG…RCELDLADDR (1312 aa)). Residues 30–67 (NNTRCLSGPCQNNSTCKHFPQDNNCCLDTANNLDKDCE) enclose the EGF-like 1; atypical domain. Intrachain disulfides connect Cys-34–Cys-45, Cys-39–Cys-54, Cys-55–Cys-66, Cys-73–Cys-84, Cys-78–Cys-95, Cys-97–Cys-106, Cys-113–Cys-124, Cys-118–Cys-133, Cys-135–Cys-144, Cys-151–Cys-162, Cys-156–Cys-171, Cys-173–Cys-182, Cys-189–Cys-200, Cys-194–Cys-209, Cys-211–Cys-220, Cys-227–Cys-238, Cys-232–Cys-247, Cys-249–Cys-258, Cys-265–Cys-276, Cys-270–Cys-285, Cys-287–Cys-297, Cys-304–Cys-315, Cys-309–Cys-324, Cys-326–Cys-335, Cys-342–Cys-353, Cys-347–Cys-382, Cys-384–Cys-393, Cys-400–Cys-411, Cys-405–Cys-420, Cys-422–Cys-437, Cys-444–Cys-455, Cys-449–Cys-468, and Cys-470–Cys-479. A glycan (N-linked (GlcNAc...) asparagine) is linked at Asn-41. EGF-like domains are found at residues 69–107 (LKDPCFSSPCQGIATCVKIPGEGNFLCQCPPGYSGLNCE) and 109–145 (ATNSCGGNLCQHGGTCRKDPEHPVCICPPGYAGRFCE). One can recognise an EGF-like 4; calcium-binding domain in the interval 147-183 (DHNECASSPCHNGAMCQDGINGYSCFCVPGYQGRHCD). An EGF-like 5; calcium-binding domain is found at 185 to 221 (EVDECVSDPCKNEAVCLNEIGRYTCVCPQEFSGVNCE). In terms of domain architecture, EGF-like 6; calcium-binding spans 223-259 (EIDECRSQPCLHGATCQDAPGGYSCDCAPGFLGEHCE). 5 consecutive EGF-like domains span residues 261-298 (SVNECESQPCLHGGLCVDGRNSYHCDCTGSGFTGMHCE), 300-336 (LIPLCWSKPCHNDATCEDTVDSYICHCRPGYTGALCE), 338-394 (DINE…IHCE), 396-438 (DVDE…ENCS), and 440-480 (ILLG…PLCE). Residues 482–669 (VTTLSFGSNG…GLSSNVKAGC (188 aa)) enclose the Laminin G-like 1 domain. 2 N-linked (GlcNAc...) asparagine glycosylation sites follow: Asn-560 and Asn-656. 4 cysteine pairs are disulfide-bonded: Cys-641/Cys-669, Cys-675/Cys-686, Cys-680/Cys-695, and Cys-697/Cys-706. In terms of domain architecture, EGF-like 12 spans 671-707 (GKDWCESQPCQNRGRCINLWQGYQCECDRPYTGSNCL). Residues 713–884 (GRFGQDDSTG…PILVNVTQGC (172 aa)) enclose the Laminin G-like 2 domain. 2 N-linked (GlcNAc...) asparagine glycosylation sites follow: Asn-756 and Asn-879. Disulfide bonds link Cys-850–Cys-884, Cys-890–Cys-901, Cys-895–Cys-910, Cys-912–Cys-921, Cys-927–Cys-938, and Cys-932–Cys-947. EGF-like domains are found at residues 886–922 (GDNTCKSNPCHNGGVCHSLWDDFSCSCPTNTAGRACE) and 923–959 (QVQWCQLSPCPPTAECQLLPQGFECIANAVFSGLSRE). The region spanning 950 to 1136 (NAVFSGLSRE…VSTNMVLTGC (187 aa)) is the Laminin G-like 3 domain. 3 N-linked (GlcNAc...) asparagine glycosylation sites follow: Asn-967, Asn-974, and Asn-999. Cystine bridges form between Cys-1095–Cys-1136, Cys-1142–Cys-1153, Cys-1147–Cys-1162, Cys-1164–Cys-1173, Cys-1180–Cys-1190, Cys-1185–Cys-1199, Cys-1201–Cys-1210, Cys-1217–Cys-1228, Cys-1222–Cys-1237, Cys-1239–Cys-1248, Cys-1258–Cys-1273, Cys-1267–Cys-1282, Cys-1284–Cys-1293, Cys-1300–Cys-1311, Cys-1305–Cys-1320, and Cys-1322–Cys-1331. Positions 1138-1174 (PSNACHSSPCLHGGNCEDSYSSYRCACLSGWSGTHCE) constitute an EGF-like 15 domain. The 36-residue stretch at 1176 to 1211 (NIDECFSSPCIHGNCSDGVAAYHCRCEPGYTGVNCE) folds into the EGF-like 16; calcium-binding domain. Asn-1189 carries N-linked (GlcNAc...) asparagine glycosylation. 2 EGF-like domains span residues 1213–1249 (DVDNCKSHQCANGATCVPEAHGYSCLCFGNFTGRFCR) and 1254–1294 (PSTV…EWCE). 2 N-linked (GlcNAc...) asparagine glycosylation sites follow: Asn-1242 and Asn-1264. In terms of domain architecture, EGF-like 19; calcium-binding spans 1296 to 1332 (DINECASDPCINGGLCRDLVNRFLCICDVAFAGERCE). The helical transmembrane segment at 1340–1360 (LLGIFTAVGSGTLALFFILLL) threads the bilayer. Topologically, residues 1361–1405 (AGVASLIASNKRATQGTYSPSGQEKAGPRVEMWIRMPPPALERLI) are cytoplasmic.

This sequence belongs to the Crumbs protein family. Component of a complex composed of PALS1, CRB1 and EPB41L5. Within the complex, interacts (via intracellular domain) with PALS1 and EPB41L5 (via FERM domain). Forms a complex with MPP4 and PALS1. Interacts with MPDZ/MUPP1 and MPP4. Post-translationally, glycosylated. Expressed in the kidney, lung, stomach and testis. Expressed in the brain. Expressed in the retina of the eye. Expressed in the outer nuclear layer, photoreceptor layer and inner nuclear layer of the retina. Expressed in Mueller cell radial processes in the inner nuclear layer, in apical processes sclerad to the external limiting membrane, and in the subapical region, adjacent to the adherens junction of retinal photoreceptors. In the brain, expressed in the granular layer of the cerebellum, the hippocampal dentate gyrus, the olfactory bulbs, the subventricular region lining the telencephalic ventricles and the rostral migratory stream. In terms of tissue distribution, ubiquitously expressed.

It is found in the apical cell membrane. The protein resides in the secreted. It localises to the cell projection. Its subcellular location is the cilium. The protein localises to the photoreceptor outer segment. It is found in the photoreceptor inner segment. The protein resides in the cytoplasm. It localises to the cell junction. Its subcellular location is the focal adhesion. In terms of biological role, plays a role in photoreceptor morphogenesis in the retina. May maintain cell polarization and adhesion. May play a role in epidermal tissue morphogenesis. May function in cell attachment for stratified epithelial organization. In Mus musculus (Mouse), this protein is Protein crumbs homolog 1 (Crb1).